The primary structure comprises 367 residues: Heme A synthase (367 aa).

A run of 5 helical transmembrane segments spans residues 25-45 (AIRI…LVGG), 111-131 (FLAR…VLTG), 137-157 (LWLP…IGWW), 174-194 (LATH…FMRA), and 211-231 (LAGL…LVAG). Histidine 274 provides a ligand contact to heme. Transmembrane regions (helical) follow at residues 276–296 (LGAY…LRAA), 305–325 (SVVL…TLLL), and 327–347 (VPLH…GFAI). A heme-binding site is contributed by histidine 335.

This sequence belongs to the COX15/CtaA family. Type 2 subfamily. Interacts with CtaB. Heme b is required as a cofactor.

Its subcellular location is the cell membrane. The enzyme catalyses Fe(II)-heme o + 2 A + H2O = Fe(II)-heme a + 2 AH2. It functions in the pathway porphyrin-containing compound metabolism; heme A biosynthesis; heme A from heme O: step 1/1. In terms of biological role, catalyzes the conversion of heme O to heme A by two successive hydroxylations of the methyl group at C8. The first hydroxylation forms heme I, the second hydroxylation results in an unstable dihydroxymethyl group, which spontaneously dehydrates, resulting in the formyl group of heme A. In Rhizobium rhizogenes (strain K84 / ATCC BAA-868) (Agrobacterium radiobacter), this protein is Heme A synthase.